Here is a 217-residue protein sequence, read N- to C-terminus: NADH dehydrogenase (ubiquinone) 23 kDa subunit (217 aa).

The transit peptide at 1–26 (MSLTMRIFTASRNGQRLFGSHGARLL) directs the protein to the mitochondrion. 2 consecutive 4Fe-4S ferredoxin-type domains span residues 109-138 (RRYPSGEERCIACKLCEAICPAQAITIEAE) and 148-177 (TRYDIDMTKCIYCGFCQEACPVDAIVEGPN). 8 residues coordinate [4Fe-4S] cluster: C118, C121, C124, C128, C157, C160, C163, and C167.

This sequence belongs to the complex I 23 kDa subunit family. Part of the mitochondrial membrane respiratory chain NADH dehydrogenase (Complex I). This is a component of the iron-sulfur (IP) fragment of the enzyme. Requires [4Fe-4S] cluster as cofactor. Expressed in muscles (at protein level).

Its subcellular location is the mitochondrion. The enzyme catalyses a ubiquinone + NADH + 5 H(+)(in) = a ubiquinol + NAD(+) + 4 H(+)(out). Functionally, core subunit of the mitochondrial membrane respiratory chain NADH dehydrogenase (Complex I) that is believed to belong to the minimal assembly required for catalysis. Complex I functions in the transfer of electrons from NADH to the respiratory chain. The immediate electron acceptor for the enzyme is believed to be ubiquinone. The chain is NADH dehydrogenase (ubiquinone) 23 kDa subunit from Drosophila melanogaster (Fruit fly).